Here is a 445-residue protein sequence, read N- to C-terminus: Chromosomal replication initiator protein DnaA (445 aa).

The segment at 1–73 is domain I, interacts with DnaA modulators; the sequence is MSPNSTLWQT…NELATKYSST (73 aa). Residues 73–102 are domain II; it reads TPVRLKFVSQEEVIEEPVADRKLTIDYRQG. Residues 103-323 form a domain III, AAA+ region region; the sequence is NLNSTYTFDS…GALIRLISYA (221 aa). ATP contacts are provided by G147, G149, K150, and T151. Residues 324–445 form a domain IV, binds dsDNA region; that stretch reads QTFNLEITMN…KFAVDSIVKK (122 aa).

It belongs to the DnaA family. As to quaternary structure, oligomerizes as a right-handed, spiral filament on DNA at oriC.

The protein resides in the cytoplasm. In terms of biological role, plays an essential role in the initiation and regulation of chromosomal replication. ATP-DnaA binds to the origin of replication (oriC) to initiate formation of the DNA replication initiation complex once per cell cycle. Binds the DnaA box (a 9 base pair repeat at the origin) and separates the double-stranded (ds)DNA. Forms a right-handed helical filament on oriC DNA; dsDNA binds to the exterior of the filament while single-stranded (ss)DNA is stabiized in the filament's interior. The ATP-DnaA-oriC complex binds and stabilizes one strand of the AT-rich DNA unwinding element (DUE), permitting loading of DNA polymerase. After initiation quickly degrades to an ADP-DnaA complex that is not apt for DNA replication. Binds acidic phospholipids. In Acholeplasma laidlawii, this protein is Chromosomal replication initiator protein DnaA.